The chain runs to 446 residues: Probable tRNA modification GTPase MnmE (446 aa).

Residues Arg28, Glu87, and Arg126 each contribute to the (6S)-5-formyl-5,6,7,8-tetrahydrofolate site. Residues 218–373 form the TrmE-type G domain; that stretch reads GIQVALLGPA…LKQLIWQQAT (156 aa). Asn228 provides a ligand contact to K(+). GTP contacts are provided by residues 228-233, 247-253, and 272-275; these read NAGKST, TPIAGTT, and DTAG. Mg(2+) is bound at residue Ser232. Residues Thr247, Ile249, and Thr252 each contribute to the K(+) site. Thr253 contributes to the Mg(2+) binding site. Lys446 contributes to the (6S)-5-formyl-5,6,7,8-tetrahydrofolate binding site.

The protein belongs to the TRAFAC class TrmE-Era-EngA-EngB-Septin-like GTPase superfamily. TrmE GTPase family. The cofactor is K(+).

The protein resides in the plastid. The protein localises to the chloroplast. Its function is as follows. Exhibits a very high intrinsic GTPase hydrolysis rate. Involved in the addition of a carboxymethylaminomethyl (cmnm) group at the wobble position (U34) of certain tRNAs, forming tRNA-cmnm(5)s(2)U34. This is Probable tRNA modification GTPase MnmE from Cyanidioschyzon merolae (strain NIES-3377 / 10D) (Unicellular red alga).